We begin with the raw amino-acid sequence, 1158 residues long: Hephaestin (1158 aa).

The first 23 residues, 1-23, serve as a signal peptide directing secretion; that stretch reads MESGHLLWALLFMQSLWPQLTDG. Plastocyanin-like domains follow at residues 24–206, 218–366, 370–560, 570–718, 731–903, and 911–1067; these read ATRV…LITC, QRQD…VKSC, PPVD…LLVC, KQKG…VSQC, AARI…LAIC, and HGGR…SRTE. Topologically, residues 24–1110 are extracellular; the sequence is ATRVYYLGIR…PIKNVEMLAS (1087 aa). Na(+) is bound by residues Gly-70 and Tyr-73. His-126 and His-128 together coordinate Cu(2+). Position 126 (His-126) interacts with O2. Ca(2+)-binding residues include Lys-134, Asp-152, and Asp-153. Asn-164 is a glycosylation site (N-linked (GlcNAc...) asparagine). A disulfide bridge links Cys-180 with Cys-206. His-186 and His-188 together coordinate Cu(2+). His-186 serves as a coordination point for O2. Asn-236 is a glycosylation site (N-linked (GlcNAc...) asparagine). Position 265 (Ser-265) interacts with Na(+). A disulfide bridge connects residues Cys-285 and Cys-366. Cu(2+)-binding residues include His-304, Cys-347, and His-352. Residues Phe-416, Gly-425, and Tyr-428 each contribute to the Na(+) site. Residues Cys-534 and Cys-560 are joined by a disulfide bond. The N-linked (GlcNAc...) asparagine glycan is linked to Asn-588. Residue Ser-617 coordinates Na(+). An intrachain disulfide couples Cys-637 to Cys-718. The Cu(2+) site is built by His-656, Cys-699, His-704, and Met-709. 2 N-linked (GlcNAc...) asparagine glycosylation sites follow: Asn-714 and Asn-758. Positions 769 and 778 each coordinate Na(+). Asn-829 and Asn-873 each carry an N-linked (GlcNAc...) asparagine glycan. The cysteines at positions 877 and 903 are disulfide-linked. N-linked (GlcNAc...) asparagine glycosylation is present at Asn-931. Cu(2+) is bound by residues His-1000, His-1003, His-1005, His-1045, Cys-1046, His-1047, His-1051, and Met-1056. O2 contacts are provided by His-1003 and His-1005. An O2-binding site is contributed by His-1047. Residues 1111–1131 form a helical membrane-spanning segment; that stretch reads VLVAISVTLLLVVLALGGVVW. The Cytoplasmic portion of the chain corresponds to 1132–1158; the sequence is YQHRQRKLRRNRRSILDDSFKLLSFKQ. 3 positions are modified to phosphoserine: Ser-1145, Ser-1150, and Ser-1155.

This sequence belongs to the multicopper oxidase family. In terms of assembly, part of a complex composed of SLC40A1/ferroportin, TF/transferrin and HEPH/hephaestin that transfers iron from cells to transferrin. Cu cation is required as a cofactor. As to expression, expressed by intestinal absorptive cells (at protein level). Also detected in breast, colon, bone trabecular cells and fibroblasts.

The protein resides in the basolateral cell membrane. It catalyses the reaction 4 Fe(2+) + O2 + 4 H(+) = 4 Fe(3+) + 2 H2O. Plasma membrane ferroxidase that mediates the extracellular conversion of ferrous/Fe(2+) iron into its ferric/Fe(3+) form. Couples ferroportin which specifically exports ferrous/Fe(2+) iron from cells to transferrin that only binds and shuttles extracellular ferric/Fe(3+) iron throughout the body. By helping iron transfer from cells to blood mainly contributes to dietary iron absorption by the intestinal epithelium and more generally regulates iron levels in the body. This chain is Hephaestin, found in Homo sapiens (Human).